The sequence spans 510 residues: Bifunctional purine biosynthesis protein PurH (510 aa).

The 142-residue stretch at 1-142 folds into the MGS-like domain; sequence MRALLSVSDK…KNFKDVLIVT (142 aa).

It belongs to the PurH family.

It catalyses the reaction (6R)-10-formyltetrahydrofolate + 5-amino-1-(5-phospho-beta-D-ribosyl)imidazole-4-carboxamide = 5-formamido-1-(5-phospho-D-ribosyl)imidazole-4-carboxamide + (6S)-5,6,7,8-tetrahydrofolate. The enzyme catalyses IMP + H2O = 5-formamido-1-(5-phospho-D-ribosyl)imidazole-4-carboxamide. It functions in the pathway purine metabolism; IMP biosynthesis via de novo pathway; 5-formamido-1-(5-phospho-D-ribosyl)imidazole-4-carboxamide from 5-amino-1-(5-phospho-D-ribosyl)imidazole-4-carboxamide (10-formyl THF route): step 1/1. Its pathway is purine metabolism; IMP biosynthesis via de novo pathway; IMP from 5-formamido-1-(5-phospho-D-ribosyl)imidazole-4-carboxamide: step 1/1. The polypeptide is Bifunctional purine biosynthesis protein PurH (Campylobacter concisus (strain 13826)).